The sequence spans 298 residues: Tyrosine recombinase XerC (298 aa).

The Core-binding (CB) domain occupies 1-85 (MQQQLDAYCA…AVRGLYHYLN (85 aa)). The Tyr recombinase domain maps to 106–285 (RLPKTLDTDR…DFQHLAAVYD (180 aa)). Residues R146, K170, H237, R240, and H263 contribute to the active site. Catalysis depends on Y272, which acts as the O-(3'-phospho-DNA)-tyrosine intermediate.

Belongs to the 'phage' integrase family. XerC subfamily. As to quaternary structure, forms a cyclic heterotetrameric complex composed of two molecules of XerC and two molecules of XerD.

The protein localises to the cytoplasm. Its function is as follows. Site-specific tyrosine recombinase, which acts by catalyzing the cutting and rejoining of the recombining DNA molecules. The XerC-XerD complex is essential to convert dimers of the bacterial chromosome into monomers to permit their segregation at cell division. It also contributes to the segregational stability of plasmids. The chain is Tyrosine recombinase XerC from Pseudomonas fluorescens (strain ATCC BAA-477 / NRRL B-23932 / Pf-5).